The sequence spans 392 residues: Proteasome-activating nucleotidase (392 aa).

A coiled-coil region spans residues 19–53; it reads IVRLLEEKIESLTKELEKLRQDLNWYKGELEKLLA. ATP-binding positions include 178–183 and Y317; that span reads GTGKTL. A docks into pockets in the proteasome alpha-ring to cause gate opening region spans residues 390–392; that stretch reads KYV.

The protein belongs to the AAA ATPase family. In terms of assembly, homohexamer. The hexameric complex has a two-ring architecture resembling a top hat that caps the 20S proteasome core at one or both ends. Upon ATP-binding, the C-terminus of PAN interacts with the alpha-rings of the proteasome core by binding to the intersubunit pockets.

It localises to the cytoplasm. In terms of biological role, ATPase which is responsible for recognizing, binding, unfolding and translocation of substrate proteins into the archaeal 20S proteasome core particle. Is essential for opening the gate of the 20S proteasome via an interaction with its C-terminus, thereby allowing substrate entry and access to the site of proteolysis. Thus, the C-termini of the proteasomal ATPase function like a 'key in a lock' to induce gate opening and therefore regulate proteolysis. Unfolding activity requires energy from ATP hydrolysis, whereas ATP binding alone promotes ATPase-20S proteasome association which triggers gate opening, and supports translocation of unfolded substrates. In Sulfurisphaera tokodaii (strain DSM 16993 / JCM 10545 / NBRC 100140 / 7) (Sulfolobus tokodaii), this protein is Proteasome-activating nucleotidase.